We begin with the raw amino-acid sequence, 485 residues long: NADH-quinone oxidoreductase subunit N (485 aa).

Helical transmembrane passes span 8–28, 35–55, 71–91, 105–125, 127–147, 159–179, 203–223, 235–255, 271–291, 297–317, 326–346, 373–393, 408–430, and 455–475; these read LIAL…MLSI, FLNA…LWFV, GFAM…CTFA, FYLL…ANHL, ALFL…GYAF, YTIL…LVYA, LLAG…LVPF, PAPV…GVVM, VVLG…ALSQ, LLGY…IALQ, VGVY…VVSL, AAVM…LGFI, WWLV…RVAV, and IVVL…QPLI.

The protein belongs to the complex I subunit 2 family. NDH-1 is composed of 13 different subunits. Subunits NuoA, H, J, K, L, M, N constitute the membrane sector of the complex.

It is found in the cell inner membrane. The enzyme catalyses a quinone + NADH + 5 H(+)(in) = a quinol + NAD(+) + 4 H(+)(out). In terms of biological role, NDH-1 shuttles electrons from NADH, via FMN and iron-sulfur (Fe-S) centers, to quinones in the respiratory chain. The immediate electron acceptor for the enzyme in this species is believed to be ubiquinone. Couples the redox reaction to proton translocation (for every two electrons transferred, four hydrogen ions are translocated across the cytoplasmic membrane), and thus conserves the redox energy in a proton gradient. The polypeptide is NADH-quinone oxidoreductase subunit N (Salmonella arizonae (strain ATCC BAA-731 / CDC346-86 / RSK2980)).